A 647-amino-acid polypeptide reads, in one-letter code: Protein INVOLVED IN DE NOVO 2 (647 aa).

2 disordered regions span residues 1 to 20 (MGST…SESE) and 101 to 123 (SASE…DCDH). Residues 9 to 20 (SDDEDSDISESE) show a composition bias toward acidic residues. Residues 253 to 508 (IAELTEEEAR…NIMKEWNTNI (256 aa)) are a coiled coil.

Interacts with FMD1/IDNL1. Forms a complex with FMD1/IDNL1 and FMD2/INDL2. Can form homodimers. Interacts with MORC6.

In terms of biological role, forms a complex with FDM1/IDNL1 and FDM2/IDNL2 that is required for RNA-directed DNA methylation (RdDM) and that functions at a downstream step of the RdDM pathway and downstream of small interfering RNA (siRNA) formation. Required for de novo DNA methylation, siRNA accumulation and siRNA-mediated maintenance methylation. Required for several post-transcriptional gene silencing pathways. Binds double-stranded RNAs (dsRNAs) with 5'-overhangs through its XS domain. Binds long non-coding RNA (lncRNA) in an AGO4-dependent manner and associates with DRM2, resulting in DNA methylation of RdDM target loci. Mediates the silencing of a subset of MORC6 target loci. The sequence is that of Protein INVOLVED IN DE NOVO 2 from Arabidopsis thaliana (Mouse-ear cress).